Consider the following 181-residue polypeptide: ATP-dependent protease subunit HslV (181 aa).

Residue T6 is part of the active site. A162, C165, and T168 together coordinate Na(+).

The protein belongs to the peptidase T1B family. HslV subfamily. In terms of assembly, a double ring-shaped homohexamer of HslV is capped on each side by a ring-shaped HslU homohexamer. The assembly of the HslU/HslV complex is dependent on binding of ATP.

It localises to the cytoplasm. The catalysed reaction is ATP-dependent cleavage of peptide bonds with broad specificity.. Its activity is regulated as follows. Allosterically activated by HslU binding. Functionally, protease subunit of a proteasome-like degradation complex believed to be a general protein degrading machinery. The protein is ATP-dependent protease subunit HslV of Solidesulfovibrio magneticus (strain ATCC 700980 / DSM 13731 / RS-1) (Desulfovibrio magneticus).